The following is a 163-amino-acid chain: Nucleotide-binding protein YajQ (163 aa).

This sequence belongs to the YajQ family.

Functionally, nucleotide-binding protein. In Salmonella paratyphi A (strain ATCC 9150 / SARB42), this protein is Nucleotide-binding protein YajQ.